A 132-amino-acid chain; its full sequence is uncharacterized protein (132 aa).

This is an uncharacterized protein from Methanocaldococcus jannaschii (strain ATCC 43067 / DSM 2661 / JAL-1 / JCM 10045 / NBRC 100440) (Methanococcus jannaschii).